A 448-amino-acid chain; its full sequence is Exodeoxyribonuclease 7 large subunit (448 aa).

The protein belongs to the XseA family. As to quaternary structure, heterooligomer composed of large and small subunits.

It is found in the cytoplasm. It catalyses the reaction Exonucleolytic cleavage in either 5'- to 3'- or 3'- to 5'-direction to yield nucleoside 5'-phosphates.. Bidirectionally degrades single-stranded DNA into large acid-insoluble oligonucleotides, which are then degraded further into small acid-soluble oligonucleotides. In Shewanella sp. (strain MR-4), this protein is Exodeoxyribonuclease 7 large subunit.